Here is a 156-residue protein sequence, read N- to C-terminus: Small ribosomal subunit protein uS7 (156 aa).

It belongs to the universal ribosomal protein uS7 family. As to quaternary structure, part of the 30S ribosomal subunit. Contacts proteins S9 and S11.

Its function is as follows. One of the primary rRNA binding proteins, it binds directly to 16S rRNA where it nucleates assembly of the head domain of the 30S subunit. Is located at the subunit interface close to the decoding center, probably blocks exit of the E-site tRNA. This chain is Small ribosomal subunit protein uS7, found in Paenarthrobacter aurescens (strain TC1).